Reading from the N-terminus, the 250-residue chain is Ubiquinone/menaquinone biosynthesis C-methyltransferase UbiE (250 aa).

S-adenosyl-L-methionine is bound by residues Thr-74, Asp-94, Asp-122–Ala-123, and Ser-139.

The protein belongs to the class I-like SAM-binding methyltransferase superfamily. MenG/UbiE family.

It carries out the reaction a 2-demethylmenaquinol + S-adenosyl-L-methionine = a menaquinol + S-adenosyl-L-homocysteine + H(+). The catalysed reaction is a 2-methoxy-6-(all-trans-polyprenyl)benzene-1,4-diol + S-adenosyl-L-methionine = a 5-methoxy-2-methyl-3-(all-trans-polyprenyl)benzene-1,4-diol + S-adenosyl-L-homocysteine + H(+). It participates in quinol/quinone metabolism; menaquinone biosynthesis; menaquinol from 1,4-dihydroxy-2-naphthoate: step 2/2. The protein operates within cofactor biosynthesis; ubiquinone biosynthesis. Its function is as follows. Methyltransferase required for the conversion of demethylmenaquinol (DMKH2) to menaquinol (MKH2) and the conversion of 2-polyprenyl-6-methoxy-1,4-benzoquinol (DDMQH2) to 2-polyprenyl-3-methyl-6-methoxy-1,4-benzoquinol (DMQH2). This is Ubiquinone/menaquinone biosynthesis C-methyltransferase UbiE from Roseobacter denitrificans (strain ATCC 33942 / OCh 114) (Erythrobacter sp. (strain OCh 114)).